Here is a 900-residue protein sequence, read N- to C-terminus: Endoglucanase H (900 aa).

An N-terminal signal peptide occupies residues 1–44 (MKKRLLVSFLVLSIIVGLLSFQSLGNYNSGLKIGAWVGTQPSES). In terms of domain architecture, GH26 spans 45–298 (AIKSFQELQG…NSSPEALAAY (254 aa)). The Proton donor role is filled by glutamate 131. The Nucleophile role is filled by glutamate 244. Residues 300 to 630 (EAIGAGSSNP…DTEILNALFN (331 aa)) are catalytic. The disordered stretch occupies residues 303–326 (GAGSSNPTPTPTWTSTPPSSSPKA). Residues 306–324 (SSNPTPTPTWTSTPPSSSP) show a composition bias toward low complexity. Glutamate 460 (proton donor) is an active-site residue. The Nucleophile role is filled by glutamate 565. The CBM11 domain occupies 655-900 (AVGEKMLDDF…LLKAISEIPI (246 aa)). The Dockerin domain maps to 827-900 (PSIKHGDLNF…LLKAISEIPI (74 aa)).

It in the N-terminal section; belongs to the glycosyl hydrolase 5 (cellulase A) family. In the C-terminal section; belongs to the glycosyl hydrolase 26 family.

It catalyses the reaction Endohydrolysis of (1-&gt;4)-beta-D-glucosidic linkages in cellulose, lichenin and cereal beta-D-glucans.. Functionally, this enzyme catalyzes the endohydrolysis of 1,4-beta-glucosidic linkages in cellulose, lichenin and cereal beta-D-glucans. This chain is Endoglucanase H (celH), found in Acetivibrio thermocellus (strain ATCC 27405 / DSM 1237 / JCM 9322 / NBRC 103400 / NCIMB 10682 / NRRL B-4536 / VPI 7372) (Clostridium thermocellum).